Reading from the N-terminus, the 543-residue chain is CTP synthase (543 aa).

The segment at 1 to 265 (MTRFIFVTGG…DQIVLDKFGL (265 aa)) is amidoligase domain. Ser-13 is a CTP binding site. Ser-13 lines the UTP pocket. ATP contacts are provided by residues 14-19 (SLGKGI) and Asp-71. Residues Asp-71 and Glu-139 each coordinate Mg(2+). Residues 146-148 (DIE), 186-191 (KTKPTQ), and Lys-222 each bind CTP. UTP contacts are provided by residues 186–191 (KTKPTQ) and Lys-222. Residues 290–541 (TIAMVGKYMD…IQAAVEQNER (252 aa)) form the Glutamine amidotransferase type-1 domain. Gly-351 contributes to the L-glutamine binding site. Cys-378 (nucleophile; for glutamine hydrolysis) is an active-site residue. Residues 379–382 (LGMQ), Glu-402, and Arg-469 contribute to the L-glutamine site. Residues His-514 and Glu-516 contribute to the active site.

The protein belongs to the CTP synthase family. In terms of assembly, homotetramer.

It catalyses the reaction UTP + L-glutamine + ATP + H2O = CTP + L-glutamate + ADP + phosphate + 2 H(+). The catalysed reaction is L-glutamine + H2O = L-glutamate + NH4(+). The enzyme catalyses UTP + NH4(+) + ATP = CTP + ADP + phosphate + 2 H(+). The protein operates within pyrimidine metabolism; CTP biosynthesis via de novo pathway; CTP from UDP: step 2/2. With respect to regulation, allosterically activated by GTP, when glutamine is the substrate; GTP has no effect on the reaction when ammonia is the substrate. The allosteric effector GTP functions by stabilizing the protein conformation that binds the tetrahedral intermediate(s) formed during glutamine hydrolysis. Inhibited by the product CTP, via allosteric rather than competitive inhibition. Its function is as follows. Catalyzes the ATP-dependent amination of UTP to CTP with either L-glutamine or ammonia as the source of nitrogen. Regulates intracellular CTP levels through interactions with the four ribonucleotide triphosphates. The sequence is that of CTP synthase from Saccharophagus degradans (strain 2-40 / ATCC 43961 / DSM 17024).